A 328-amino-acid chain; its full sequence is MISLESQVLQRHLSFFEHKSVLFAGGINDQFPQQVPARSVKVWSWYFDYAKSKSAVDFSLTCEEKADLMVFYWTKNKQEVQFQLMQLLAQAPIGQEMLIVGENRCGVRSVEKMLDAYGDIAKIDSARRCGLYHFCLKNTPHFALADYWKTYQHPRLGDLRIYSLPGVFSANELDVGTDLLLSTLDQPVRGKVLDLGCGAGVIGAYIKQQYPQVELTMADIHALALASSQRTLAENQLEAEVIASDVFSNVAGKFDLIISNPPFHDGIDTAYRAVSELIMQAKWHLVPGGELRIVANAFLPYPDLLDQHFGSHCVLAKTTKFKVYSVRG.

The protein belongs to the methyltransferase superfamily. RsmC family. As to quaternary structure, monomer.

The protein localises to the cytoplasm. The catalysed reaction is guanosine(1207) in 16S rRNA + S-adenosyl-L-methionine = N(2)-methylguanosine(1207) in 16S rRNA + S-adenosyl-L-homocysteine + H(+). Specifically methylates the guanine in position 1207 of 16S rRNA in the 30S particle. In Pasteurella multocida (strain Pm70), this protein is Ribosomal RNA small subunit methyltransferase C.